The primary structure comprises 551 residues: Dihydroxy-acid dehydratase (551 aa).

Position 78 (Asp78) interacts with Mg(2+). Cys119 contributes to the [2Fe-2S] cluster binding site. 2 residues coordinate Mg(2+): Asp120 and Lys121. Lys121 is subject to N6-carboxylysine. Residue Cys191 coordinates [2Fe-2S] cluster. Mg(2+) is bound at residue Glu441. Ser467 functions as the Proton acceptor in the catalytic mechanism.

The protein belongs to the IlvD/Edd family. In terms of assembly, homodimer. The cofactor is [2Fe-2S] cluster. Mg(2+) serves as cofactor.

It carries out the reaction (2R)-2,3-dihydroxy-3-methylbutanoate = 3-methyl-2-oxobutanoate + H2O. The enzyme catalyses (2R,3R)-2,3-dihydroxy-3-methylpentanoate = (S)-3-methyl-2-oxopentanoate + H2O. The protein operates within amino-acid biosynthesis; L-isoleucine biosynthesis; L-isoleucine from 2-oxobutanoate: step 3/4. Its pathway is amino-acid biosynthesis; L-valine biosynthesis; L-valine from pyruvate: step 3/4. Functions in the biosynthesis of branched-chain amino acids. Catalyzes the dehydration of (2R,3R)-2,3-dihydroxy-3-methylpentanoate (2,3-dihydroxy-3-methylvalerate) into 2-oxo-3-methylpentanoate (2-oxo-3-methylvalerate) and of (2R)-2,3-dihydroxy-3-methylbutanoate (2,3-dihydroxyisovalerate) into 2-oxo-3-methylbutanoate (2-oxoisovalerate), the penultimate precursor to L-isoleucine and L-valine, respectively. The sequence is that of Dihydroxy-acid dehydratase from Pyrococcus abyssi (strain GE5 / Orsay).